The primary structure comprises 658 residues: MVNSKGKITDSDPGSSHLLLNGLADKAGKNQDTEPENSLCSQYEEKVRPCIDLIDSLRALGVEQDLALPAIAVIGDQSSGKSSVLEALSGVALPRGSGIVTRCPLVLKLKKLLNKDEWRGKVSYQDFEMEISDPSEVEVEINKAQNAIAGEGQGISHELISLEVSSPHVPDLTLIDLPGITRVAVGNQPADIGHQTKKLIKKYILKQETINLVVVPCNVDIATTEALSMAQEVDPDGDRTIGILTKPDLVDRGTESKVVDVAQNLVCHLKKGYMIVKCRGQQDIQDQVTLTEALQKERDFFEDHPHFRVLLEEGRATVPCLADRLTSELITHICKTLPLLEKQIKENYEKITEELQKYGSDVPEEEHEKMFFLIEKINAFNHDITSLTEGEEFVGEDECRLFTKIRNEFHKWSLVIEKRFQQGYKAICKQIERFENRYRGRELPGFVNYKTFEIIIKQQIKELEEPAVYMLHTITDMVQAAFTDISEANFAEFFNLYRTTKSKIEDIKFELEKEAEKSIRLHFQMEQIVYCQDQVYQCALQRVREESDKEKDKKINSMCSKEVSSVNISLSDIFEHLLAYRQEATNRISSHIPLIIQYFILQVYGQKLQKDMLLLLHDKDTHNWLLKERSDTRDKRKLLKERLARLAQARRRLAKFPG.

M1 is subject to N-acetylmethionine. Residues 1–20 are disordered; it reads MVNSKGKITDSDPGSSHLLL. The Dynamin-type G domain occupies 65–338; it reads DLALPAIAVI…LITHICKTLP (274 aa). The segment at 75-82 is G1 motif; sequence GDQSSGKS. 75-82 is a GTP binding site; sequence GDQSSGKS. The G2 motif stretch occupies residues 100–102; the sequence is VTR. A G3 motif region spans residues 176-179; sequence DLPG. GTP is bound by residues 176-180 and 245-248; these read DLPGI and TKPD. A G4 motif region spans residues 245–248; sequence TKPD. A G5 motif region spans residues 277–280; sequence KCRG. The bundle signaling element (BSE) stretch occupies residues 339 to 364; it reads LLEKQIKENYEKITEELQKYGSDVPE. The middle domain stretch occupies residues 364–531; it reads EEEHEKMFFL…HFQMEQIVYC (168 aa). The interval 365-628 is stalk; the sequence is EEHEKMFFLI…KDTHNWLLKE (264 aa). Positions 551 to 554 are critical for lipid-binding; sequence KDKK. Positions 570-658 constitute a GED domain; sequence LSDIFEHLLA…ARRRLAKFPG (89 aa).

The protein belongs to the TRAFAC class dynamin-like GTPase superfamily. Dynamin/Fzo/YdjA family. As to quaternary structure, homooligomer. Oligomerizes into multimeric filamentous or ring-like structures by virtue of its stalk domain. Oligomerization is critical for GTPase activity, protein stability, and recognition of viral target structures. Interacts with TRPC1, TRPC3, TRPC4, TRPC5, TRPC6 and TRPC7. Interacts with HSPA5. Interacts with TUBB/TUBB5. Interacts with DDX39A and DDX39B. Post-translationally, ISGylated.

The protein resides in the cytoplasm. The protein localises to the endoplasmic reticulum membrane. It localises to the perinuclear region. Interferon-induced dynamin-like GTPase with antiviral activity. This chain is Interferon-induced GTP-binding protein Mx1 (MX1), found in Otaria byronia (South American sea lion).